Here is a 341-residue protein sequence, read N- to C-terminus: UPF0283 membrane protein VV2076 (341 aa).

Transmembrane regions (helical) follow at residues 64–84, 93–113, 207–227, and 255–275; these read LAGG…VDSV, WLTL…LGAM, ESAA…LVAW, and LVLA…AGMD.

This sequence belongs to the UPF0283 family.

The protein resides in the cell inner membrane. This Vibrio vulnificus (strain YJ016) protein is UPF0283 membrane protein VV2076.